We begin with the raw amino-acid sequence, 393 residues long: MTNSNRIKLTWISFLSYALTGALVIVTGMVMGNIADYFNLPVSSMSNTFTFLNAGILISIFLNAWLMEIVPLKTQLRFGFLLMVLAVAGLMFSHSLALFSAAMFILGVVSGITMSIGTFLITQMYEGRQRGSRLLFTDSFFSMAGMIFPMIAAFLLARSIEWYWVYACIGLVYVAIFILTFGCEFPALGKHAPKTDAPVEKEKWGIGVLFLSIAALCYILGQLGFISWVPEYAKGLGMSLNDAGTLVSNFWMSYMVGMWAFSFILRFFDLQRILTVLAGLAAILMYVFNTGTPAHMAWSILALGFFSSAIYTTIITLGSQQTKVPSPKLVNFVLTCGTIGTMLTFVVTGPIVEHSGPQAALLTANGLYAVVFVMCFLLGFVSRHRQHNTLTSH.

A run of 12 helical transmembrane segments spans residues 11–31, 51–71, 78–98, 101–121, 134–154, 162–182, 206–226, 245–265, 273–293, 297–317, 332–352, and 361–381; these read WISF…GMVM, FLNA…EIVP, FGFL…SLAL, AAMF…TFLI, LLFT…IAAF, WYWV…LTFG, IGVL…LGFI, TLVS…SFIL, ILTV…TGTP, AWSI…IITL, FVLT…GPIV, and LLTA…LGFV.

This sequence belongs to the major facilitator superfamily. TsgA family.

It localises to the cell inner membrane. The sequence is that of Protein TsgA from Escherichia coli O7:K1 (strain IAI39 / ExPEC).